We begin with the raw amino-acid sequence, 197 residues long: Phosphoheptose isomerase (197 aa).

In terms of domain architecture, SIS spans 41–197 (VVETFRRGGK…EIVERTLFEE (157 aa)). 56-58 (NGG) contacts substrate. Zn(2+) contacts are provided by His-65 and Glu-69. Substrate contacts are provided by residues Glu-69, 98–99 (ND), 124–126 (STS), Ser-129, and Gln-176. Gln-176 and His-184 together coordinate Zn(2+).

The protein belongs to the SIS family. GmhA subfamily. Zn(2+) serves as cofactor.

It is found in the cytoplasm. The enzyme catalyses 2 D-sedoheptulose 7-phosphate = D-glycero-alpha-D-manno-heptose 7-phosphate + D-glycero-beta-D-manno-heptose 7-phosphate. Its pathway is carbohydrate biosynthesis; D-glycero-D-manno-heptose 7-phosphate biosynthesis; D-glycero-alpha-D-manno-heptose 7-phosphate and D-glycero-beta-D-manno-heptose 7-phosphate from sedoheptulose 7-phosphate: step 1/1. Functionally, catalyzes the isomerization of sedoheptulose 7-phosphate in D-glycero-D-manno-heptose 7-phosphate. The sequence is that of Phosphoheptose isomerase from Roseiflexus sp. (strain RS-1).